Consider the following 558-residue polypeptide: Protein OS-9 homolog (558 aa).

Positions 1–17 (MLLKSLALIASSSLAAT) are cleaved as a signal peptide. An N-linked (GlcNAc...) asparagine glycan is attached at Asn-68. Residues 111 to 237 (GDCLFYEQGF…QVGTPRLCKD (127 aa)) enclose the MRH domain. Residues Cys-113 and Cys-126 are joined by a disulfide bond. Gln-133, Arg-197, Glu-219, and Tyr-225 together coordinate a mannooligosaccharide derivative. 2 disulfides stabilise this stretch: Cys-190–Cys-223 and Cys-205–Cys-235. Disordered stretches follow at residues 435–508 (SKKL…DEDE) and 539–558 (KDLA…GLSD). Residues 441–466 (KKEAASTKREEAKKQVEASVEEKAVD) show a composition bias toward basic and acidic residues. The span at 474–492 (DTVTSTQTFFRTQTLSTAE) shows a compositional bias: polar residues. Residues 543 to 558 (DKEDDDDDYEDYGLSD) show a composition bias toward acidic residues.

This sequence belongs to the OS-9 family. Interacts with missfolded ER lumenal proteins.

It localises to the endoplasmic reticulum membrane. Its function is as follows. Lectin involved in the quality control of the secretory pathway. As a member of the endoplasmic reticulum-associated degradation lumenal (ERAD-L) surveillance system, targets misfolded endoplasmic reticulum lumenal glycoproteins for degradation. This Yarrowia lipolytica (strain CLIB 122 / E 150) (Yeast) protein is Protein OS-9 homolog (YOS9).